The primary structure comprises 145 residues: Peptide methionine sulfoxide reductase MsrB (145 aa).

In terms of domain architecture, MsrB spans 6 to 129; it reads EEELKQTLTD…NAAALRFVPV (124 aa). Catalysis depends on Cys-118, which acts as the Nucleophile.

This sequence belongs to the MsrB Met sulfoxide reductase family.

The catalysed reaction is L-methionyl-[protein] + [thioredoxin]-disulfide + H2O = L-methionyl-(R)-S-oxide-[protein] + [thioredoxin]-dithiol. The polypeptide is Peptide methionine sulfoxide reductase MsrB (Enterococcus faecalis (strain ATCC 700802 / V583)).